Here is a 55-residue protein sequence, read N- to C-terminus: Large ribosomal subunit protein bL33 (55 aa).

This sequence belongs to the bacterial ribosomal protein bL33 family.

In Buchnera aphidicola subsp. Schizaphis graminum (strain Sg), this protein is Large ribosomal subunit protein bL33.